The primary structure comprises 244 residues: Carboxy-S-adenosyl-L-methionine synthase (244 aa).

S-adenosyl-L-methionine is bound by residues tyrosine 40, 65 to 67 (GCS), 90 to 91 (DN), 119 to 120 (DL), asparagine 134, and arginine 201.

The protein belongs to the class I-like SAM-binding methyltransferase superfamily. Cx-SAM synthase family. Homodimer.

The catalysed reaction is prephenate + S-adenosyl-L-methionine = carboxy-S-adenosyl-L-methionine + 3-phenylpyruvate + H2O. Its function is as follows. Catalyzes the conversion of S-adenosyl-L-methionine (SAM) to carboxy-S-adenosyl-L-methionine (Cx-SAM). The polypeptide is Carboxy-S-adenosyl-L-methionine synthase (Geobacter metallireducens (strain ATCC 53774 / DSM 7210 / GS-15)).